Consider the following 294-residue polypeptide: Hydroxyethylthiazole kinase (294 aa).

M57 is a binding site for substrate. The ATP site is built by R132 and S196. G223 lines the substrate pocket.

Belongs to the Thz kinase family. Requires Mg(2+) as cofactor.

The catalysed reaction is 5-(2-hydroxyethyl)-4-methylthiazole + ATP = 4-methyl-5-(2-phosphooxyethyl)-thiazole + ADP + H(+). The protein operates within cofactor biosynthesis; thiamine diphosphate biosynthesis; 4-methyl-5-(2-phosphoethyl)-thiazole from 5-(2-hydroxyethyl)-4-methylthiazole: step 1/1. Its function is as follows. Catalyzes the phosphorylation of the hydroxyl group of 4-methyl-5-beta-hydroxyethylthiazole (THZ). The protein is Hydroxyethylthiazole kinase of Bifidobacterium adolescentis (strain ATCC 15703 / DSM 20083 / NCTC 11814 / E194a).